A 163-amino-acid chain; its full sequence is NADH-quinone oxidoreductase subunit I (163 aa).

2 4Fe-4S ferredoxin-type domains span residues 54–84 and 94–123; these read LRRY…IDSA and TRYD…ETHI. [4Fe-4S] cluster contacts are provided by Cys-64, Cys-67, Cys-70, Cys-74, Cys-103, Cys-106, Cys-109, and Cys-113.

Belongs to the complex I 23 kDa subunit family. In terms of assembly, NDH-1 is composed of 14 different subunits. Subunits NuoA, H, J, K, L, M, N constitute the membrane sector of the complex. It depends on [4Fe-4S] cluster as a cofactor.

The protein resides in the cell inner membrane. The catalysed reaction is a quinone + NADH + 5 H(+)(in) = a quinol + NAD(+) + 4 H(+)(out). NDH-1 shuttles electrons from NADH, via FMN and iron-sulfur (Fe-S) centers, to quinones in the respiratory chain. The immediate electron acceptor for the enzyme in this species is believed to be ubiquinone. Couples the redox reaction to proton translocation (for every two electrons transferred, four hydrogen ions are translocated across the cytoplasmic membrane), and thus conserves the redox energy in a proton gradient. The polypeptide is NADH-quinone oxidoreductase subunit I (Xanthomonas oryzae pv. oryzae (strain KACC10331 / KXO85)).